The sequence spans 265 residues: MKTQQREQALAIYQQHQGKITNRAIADTIGVSAKTIGIWKKQDKWKEALFSASKNEQKQRPINNDELNERQRLFCLYYVKSFNATQSAIKAGYSPDSAHVTGSRLLKNEKVAAEIRRIKKEMVNEMFIEAMDVLQVYIKIAFADITDYVTFGKKEVQAVGKSGPLFDEDDNPIMKEISFVDVKDSGLVDGTIVTEAKLGKEGIAIKLADKMKALEKLSLYFDLFPDQFKQKIENEKLKLAKQKAEKTDDSQEPIEIMIKRKERKS.

The segment at 241 to 265 is disordered; the sequence is KQKAEKTDDSQEPIEIMIKRKERKS.

The protein to B.subtilis YqaS and B.subtilis phage SPP1 terminase small subunit. Dimer of a small and a large subunit.

Its function is as follows. Functions as a terminase. This is PBSX phage terminase small subunit (xtmA) from Bacillus subtilis (strain 168).